The primary structure comprises 158 residues: Regulator of sigma D (158 aa).

Belongs to the Rsd/AlgQ family. As to quaternary structure, interacts with RpoD.

The protein resides in the cytoplasm. Its function is as follows. Binds RpoD and negatively regulates RpoD-mediated transcription activation by preventing the interaction between the primary sigma factor RpoD with the catalytic core of the RNA polymerase and with promoter DNA. May be involved in replacement of the RNA polymerase sigma subunit from RpoD to RpoS during the transition from exponential growth to the stationary phase. This chain is Regulator of sigma D, found in Shigella dysenteriae serotype 1 (strain Sd197).